A 1306-amino-acid chain; its full sequence is Synergin gamma (1306 aa).

The stretch at 113–153 forms a coiled coil; it reads MQKQFAEEQQKRFEQQQKLLEEERKRRQFEEQKQKLRLLSS. Disordered stretches follow at residues 176-196 and 252-285; these read GFSRDAKMHPTPASHPKKQGP and SGPASAEAEKTSDQTLSKEESGVGVFPSQDPAQS. Basic and acidic residues predominate over residues 258 to 272; that stretch reads EAEKTSDQTLSKEES. An EH domain is found at 293-404; the sequence is NESLVPDAYK…TPVSQPTAMP (112 aa). The short motif at 455–459 is the DFXDF motif 1 element; that stretch reads DFQDF. The tract at residues 460 to 494 is disordered; sequence QDASKSGSIDDSFTDFQEMPASSKTSNSQHGNSAP. Serine 471 is subject to Phosphoserine. Lysine 509 is modified (N6-acetyllysine). The segment at 514–778 is interaction with AP1G1; it reads KGISTDKPSE…ADFHSSKFSS (265 aa). The interval 559–601 is disordered; sequence STGTDDGFTDFKTADSVSPLEPPTKDTFPSAFASGAAQQTQTQ. The residue at position 576 (serine 576) is a Phosphoserine. The interaction with AP1G1, AP1G2 and GGA1 stretch occupies residues 661-673; the sequence is LADDFGEFNLFGE. The DFXDF motif 2 motif lies at 685 to 689; sequence DFADF. The disordered stretch occupies residues 697–730; it reads ISSEPKASDKYEALREEVSPSPLSSSTVEGAQHP. The span at 702-714 shows a compositional bias: basic and acidic residues; sequence KASDKYEALREEV. Serine 715 is subject to Phosphoserine. Lysine 736 is subject to N6-acetyllysine. Phosphoserine is present on residues serine 744 and serine 764. The DFXDF motif 3 motif lies at 767–771; that stretch reads DFADF. A phosphoserine mark is found at serine 804, serine 844, serine 847, serine 901, serine 911, serine 927, serine 974, serine 998, serine 1065, serine 1067, serine 1079, and serine 1090. 2 disordered regions span residues 986–1016 and 1065–1090; these read PTVDRSQETSCPSPASSVASHETPKEGADDF and SLSLGDKEISRSSPSPALEQPFRDRS. Positions 993–1005 are enriched in polar residues; the sequence is ETSCPSPASSVAS. The residue at position 1092 (threonine 1092) is a Phosphothreonine.

In terms of assembly, self-associates. Interacts with GGA1 (via GAE domain). Interacts with GGA2 and GGA3. Interacts with AP1G1 (via GAE domain), a subunit of adapter protein complex AP-1. Interacts with AP1G2 (via GAE domain) a subunit of adapter protein complex AP-1. Component of the aftiphilin/p200/gamma-synergin complex, at least composed of AFTPH/aftiphilin, HEATR5B/p200a and SYNRG/gamma-synergin, which plays a role in the AP1G1/AP-1-mediated trafficking of transferrin from early to recycling endosomes. Within the complex interacts with AFTPH/aftiphilin and HEATR5B/p200a; the interactions are direct. Interacts (via EH domain) with SCAMP1.

Its subcellular location is the cytoplasm. It localises to the cytosol. The protein localises to the golgi apparatus. It is found in the trans-Golgi network membrane. The protein resides in the perinuclear region. Its subcellular location is the cytoplasmic vesicle. It localises to the clathrin-coated vesicle. Its function is as follows. Plays a role in endocytosis and/or membrane trafficking at the trans-Golgi network (TGN). May act by linking the adapter protein complex AP-1 to other proteins. Component of clathrin-coated vesicles. Component of the aftiphilin/p200/gamma-synergin complex, which plays roles in AP1G1/AP-1-mediated protein trafficking including the trafficking of transferrin from early to recycling endosomes, and the membrane trafficking of furin and the lysosomal enzyme cathepsin D between the trans-Golgi network (TGN) and endosomes. The sequence is that of Synergin gamma (Synrg) from Mus musculus (Mouse).